A 285-amino-acid polypeptide reads, in one-letter code: Probable endonuclease 4 (285 aa).

Zn(2+) contacts are provided by His-69, His-109, Glu-145, Asp-179, His-182, His-216, Asp-229, His-231, and Glu-261.

Belongs to the AP endonuclease 2 family. Zn(2+) serves as cofactor.

The enzyme catalyses Endonucleolytic cleavage to 5'-phosphooligonucleotide end-products.. In terms of biological role, endonuclease IV plays a role in DNA repair. It cleaves phosphodiester bonds at apurinic or apyrimidinic (AP) sites, generating a 3'-hydroxyl group and a 5'-terminal sugar phosphate. This is Probable endonuclease 4 from Escherichia coli O127:H6 (strain E2348/69 / EPEC).